Consider the following 709-residue polypeptide: Phosphomethylpyrimidine synthase (709 aa).

Over residues 1-13 the composition is skewed to polar residues; it reads MNIRSNPDTTLPA. 2 disordered regions span residues 1-21 and 125-168; these read MNIR…PLPS and DAPA…GREQ. Residues Asn274, Met303, Tyr332, His368, 388–390, 429–432, and Glu468 contribute to the substrate site; these read SRG and DGLR. Position 472 (His472) interacts with Zn(2+). Tyr495 contacts substrate. His536 serves as a coordination point for Zn(2+). [4Fe-4S] cluster-binding residues include Cys616, Cys619, and Cys624.

This sequence belongs to the ThiC family. In terms of assembly, homodimer. It depends on [4Fe-4S] cluster as a cofactor.

It catalyses the reaction 5-amino-1-(5-phospho-beta-D-ribosyl)imidazole + S-adenosyl-L-methionine = 4-amino-2-methyl-5-(phosphooxymethyl)pyrimidine + CO + 5'-deoxyadenosine + formate + L-methionine + 3 H(+). Its pathway is cofactor biosynthesis; thiamine diphosphate biosynthesis. In terms of biological role, catalyzes the synthesis of the hydroxymethylpyrimidine phosphate (HMP-P) moiety of thiamine from aminoimidazole ribotide (AIR) in a radical S-adenosyl-L-methionine (SAM)-dependent reaction. This Rhodopseudomonas palustris (strain BisB18) protein is Phosphomethylpyrimidine synthase.